Consider the following 539-residue polypeptide: Nucleoporin NUP60 (539 aa).

Ser10, Ser49, Ser81, and Ser89 each carry phosphoserine. A disordered region spans residues 44–80 (DSARVSPRNNVANKQPRNESFNRRISSMPGGYFHSEI). The stretch at 91–118 (VVSAVGEARNDIENKEEEYDETHETNIS) forms a coiled coil. Phosphoserine is present on residues Ser162, Ser171, Ser214, and Ser222. Polar residues-rich tracts occupy residues 242–252 (TANTSAQSIAS) and 258–267 (SGVSKSAPSK). Disordered stretches follow at residues 242 to 267 (TANT…APSK), 305 to 329 (IRKH…TTVK), and 347 to 493 (NATK…GKHI). Over residues 347–359 (NATKISPSAPSKD) the composition is skewed to polar residues. 4 positions are modified to phosphoserine: Ser352, Ser360, Ser374, and Ser382. 2 stretches are compositionally biased toward polar residues: residues 395–433 (SAFN…TNLQ) and 448–485 (GDST…LSQE). FXF repeat units follow at residues 399–401 (FSF) and 427–429 (FNF). Residue Thr460 is modified to Phosphothreonine. Residues 469 to 471 (FVF) form an FXF 3 repeat. Phosphoserine is present on residues Ser480 and Ser483. One copy of the FXF 4 repeat lies at 509 to 511 (FDF).

In terms of assembly, component of the nuclear pore complex (NPC). NPC constitutes the exclusive means of nucleocytoplasmic transport. NPCs allow the passive diffusion of ions and small molecules and the active, nuclear transport receptor-mediated bidirectional transport of macromolecules such as proteins, RNAs, ribonucleoparticles (RNPs), and ribosomal subunits across the nuclear envelope. Due to its 8-fold rotational symmetry, all subunits are present with 8 copies or multiples thereof. Binds to NUP1 and NUP2 forming the nuclear basket and the distal ring. The interaction with NUP2 is GSP1-GTP-dependent. Interacts through its FG repeats with karyopherins, such as KAP123 and KAP95-SRP1 (KAP60). Also interacts with GSP1-GTP and SRM1 (PRP20), where NUP60 reduces SRM1 activity, thus inhibiting GSP1 guanine nucleotide dissociation. In terms of processing, phosphorylated by CDC28.

The protein resides in the nucleus. It is found in the nuclear pore complex. The protein localises to the nucleus membrane. Functions as a component of the nuclear pore complex (NPC). NPC components, collectively referred to as nucleoporins (NUPs), can play the role of both NPC structural components and of docking or interaction partners for transiently associated nuclear transport factors. Active directional transport is assured by both, a Phe-Gly (FG) repeat affinity gradient for these transport factors across the NPC and a transport cofactor concentration gradient across the nuclear envelope (GSP1 and GSP2 GTPases associated predominantly with GTP in the nucleus, with GDP in the cytoplasm). The chain is Nucleoporin NUP60 (NUP60) from Saccharomyces cerevisiae (strain ATCC 204508 / S288c) (Baker's yeast).